A 334-amino-acid polypeptide reads, in one-letter code: N-acetyl-S-alkylcysteine monooxygenase (334 aa).

This sequence to bacterial alkanal monooxygenase alpha and beta chains.

It catalyses the reaction N-acetyl-S-benzyl-L-cysteine + FMNH2 + O2 = (R)-N-acetyl-S-benzyl-L-cysteine sulfoxide + FMN + H2O + H(+). It carries out the reaction N-acetyl-S-methyl-L-cysteine + FMNH2 + O2 = (R)-N-acetyl-S-methyl-L-cysteine sulfoxide + FMN + H2O + H(+). It participates in amino-acid metabolism. Its function is as follows. Involved in a cysteine salvage pathway from S-alkylcysteine. Catalyzes the oxidation of N-acetyl-S-benzyl-L-cysteine and N-acetyl-S-methyl-L-cysteine to (R)-N-acetyl-S-benzyl-L-cysteine sulfoxide and (R)-N-acetyl-S-methyl-L-cysteine sulfoxide, respectively. This pathway is likely important in the catabolism of alkylated cysteine generated by proteolysis of alkylated glutathione formed in the detoxification of a wide range of electrophiles. This is N-acetyl-S-alkylcysteine monooxygenase from Bacillus subtilis (strain 168).